A 560-amino-acid polypeptide reads, in one-letter code: Dihydroxy-acid dehydratase (560 aa).

Asp78 contributes to the Mg(2+) binding site. Cys119 lines the [2Fe-2S] cluster pocket. Mg(2+)-binding residues include Asp120 and Lys121. Lys121 is modified (N6-carboxylysine). Cys192 provides a ligand contact to [2Fe-2S] cluster. Residue Glu446 participates in Mg(2+) binding. Catalysis depends on Ser472, which acts as the Proton acceptor.

This sequence belongs to the IlvD/Edd family. As to quaternary structure, homodimer. [2Fe-2S] cluster serves as cofactor. It depends on Mg(2+) as a cofactor.

It catalyses the reaction (2R)-2,3-dihydroxy-3-methylbutanoate = 3-methyl-2-oxobutanoate + H2O. It carries out the reaction (2R,3R)-2,3-dihydroxy-3-methylpentanoate = (S)-3-methyl-2-oxopentanoate + H2O. The protein operates within amino-acid biosynthesis; L-isoleucine biosynthesis; L-isoleucine from 2-oxobutanoate: step 3/4. It participates in amino-acid biosynthesis; L-valine biosynthesis; L-valine from pyruvate: step 3/4. Functionally, functions in the biosynthesis of branched-chain amino acids. Catalyzes the dehydration of (2R,3R)-2,3-dihydroxy-3-methylpentanoate (2,3-dihydroxy-3-methylvalerate) into 2-oxo-3-methylpentanoate (2-oxo-3-methylvalerate) and of (2R)-2,3-dihydroxy-3-methylbutanoate (2,3-dihydroxyisovalerate) into 2-oxo-3-methylbutanoate (2-oxoisovalerate), the penultimate precursor to L-isoleucine and L-valine, respectively. In Anaeromyxobacter sp. (strain K), this protein is Dihydroxy-acid dehydratase.